The sequence spans 509 residues: Photosystem II CP47 reaction center protein (509 aa).

6 helical membrane-spanning segments follow: residues 21 to 36 (AVHL…WAGS), 101 to 115 (IVLS…IWHW), 140 to 156 (GIHL…FGAF), 203 to 218 (IAAG…FHLT), 237 to 252 (VLSS…AFIT), and 457 to 472 (NFAL…HGSR).

It belongs to the PsbB/PsbC family. PsbB subfamily. As to quaternary structure, PSII is composed of 1 copy each of membrane proteins PsbA, PsbB, PsbC, PsbD, PsbE, PsbF, PsbH, PsbI, PsbJ, PsbK, PsbL, PsbM, PsbT, PsbX, PsbY, PsbZ, Psb30/Ycf12, at least 3 peripheral proteins of the oxygen-evolving complex and a large number of cofactors. It forms dimeric complexes. Binds multiple chlorophylls. PSII binds additional chlorophylls, carotenoids and specific lipids. is required as a cofactor.

Its subcellular location is the plastid. It is found in the chloroplast thylakoid membrane. Its function is as follows. One of the components of the core complex of photosystem II (PSII). It binds chlorophyll and helps catalyze the primary light-induced photochemical processes of PSII. PSII is a light-driven water:plastoquinone oxidoreductase, using light energy to abstract electrons from H(2)O, generating O(2) and a proton gradient subsequently used for ATP formation. The polypeptide is Photosystem II CP47 reaction center protein (Porphyra purpurea (Red seaweed)).